Reading from the N-terminus, the 147-residue chain is DNA polymerase III subunit chi (147 aa).

It belongs to the DNA polymerase III chi/HolC chain family. In terms of assembly, the DNA polymerase III holoenzyme complex contains at least 10 different subunits organized into 3 functionally essential subassemblies: the Pol III core, the beta sliding clamp processivity factor and the clamp-loading complex. The Pol III core (subunits alpha, epsilon and theta) contains the polymerase and the 3'-5' exonuclease proofreading activities. The polymerase is tethered to the template via the dimeric beta sliding clamp processivity factor. The clamp-loading complex (also called gamma complex) assembles the beta sliding clamp onto the primed template and plays a central role in the organization and communication at the replication fork. The clamp-loading complex contains delta, delta', psi and chi, and 3 copies of either or both of two different DnaX proteins, gamma and tau. The DNA replisome complex has a single clamp loader (3 tau and 1 each of delta, delta', psi and chi subunits) which binds 3 Pol III cores (1 core on the leading strand and 2 on the lagging strand) each with a beta sliding clamp dimer. Additional proteins in the replisome are other copies of gamma, psi (holD) and chi (this protein), SSB, DNA helicase and RNA primase. The clamp loader hydrolyzes ATP to assemble the beta processivity factor onto the primed template and plays a central role in the organization and communication at the replication fork. The only subunit of the DNA polymerase III holoenzyme known to interact with single-stranded DNA binding protein (SSB). Interacts directly with the psi subunit (holD). Interacts directly with DNA helicase YoaA. It binds to HolD and YoaA, but not both simultaneously.

The enzyme catalyses DNA(n) + a 2'-deoxyribonucleoside 5'-triphosphate = DNA(n+1) + diphosphate. In terms of biological role, part of the beta sliding clamp loading complex, which hydrolyzes ATP to load the beta clamp onto primed DNA to form the DNA replication pre-initiation complex. DNA polymerase III is a complex, multichain enzyme responsible for most of the replicative synthesis in bacteria. This DNA polymerase also exhibits 3' to 5' exonuclease activity. Genetically identified as involved in the repair of replication forks and tolerance of the chain-terminating nucleoside analog 3' AZT. This subunit may stabilize YoaA and/or stimulate the helicase activity of YoaA. The sequence is that of DNA polymerase III subunit chi from Escherichia coli (strain K12).